We begin with the raw amino-acid sequence, 316 residues long: 33 kDa chaperonin (316 aa).

2 disulfides stabilise this stretch: C239–C241 and C272–C275.

It belongs to the HSP33 family. In terms of processing, under oxidizing conditions two disulfide bonds are formed involving the reactive cysteines. Under reducing conditions zinc is bound to the reactive cysteines and the protein is inactive.

It localises to the cytoplasm. Redox regulated molecular chaperone. Protects both thermally unfolding and oxidatively damaged proteins from irreversible aggregation. Plays an important role in the bacterial defense system toward oxidative stress. This is 33 kDa chaperonin from Clostridium perfringens (strain SM101 / Type A).